A 1798-amino-acid polypeptide reads, in one-letter code: Focadhesin (1798 aa).

Lys816 carries the N6-acetyllysine modification.

As to quaternary structure, interacts with VCL. As to expression, expressed by glial and neuronal cells in brain.

The protein localises to the cell junction. The protein resides in the focal adhesion. Its subcellular location is the cytoplasm. It is found in the cytosol. In terms of biological role, required for the maintenance of SKIC2 and SKIC3 proteostatic levels in the liver. May be involved in the regulation of RNA degradation by the exosome complex. Potential tumor suppressor in gliomas. This is Focadhesin (Focad) from Mus musculus (Mouse).